Reading from the N-terminus, the 83-residue chain is Large ribosomal subunit protein bL27 (83 aa).

This sequence belongs to the bacterial ribosomal protein bL27 family.

The sequence is that of Large ribosomal subunit protein bL27 (rpmA) from Thermotoga maritima (strain ATCC 43589 / DSM 3109 / JCM 10099 / NBRC 100826 / MSB8).